A 152-amino-acid chain; its full sequence is SsrA-binding protein (152 aa).

It belongs to the SmpB family.

The protein localises to the cytoplasm. In terms of biological role, required for rescue of stalled ribosomes mediated by trans-translation. Binds to transfer-messenger RNA (tmRNA), required for stable association of tmRNA with ribosomes. tmRNA and SmpB together mimic tRNA shape, replacing the anticodon stem-loop with SmpB. tmRNA is encoded by the ssrA gene; the 2 termini fold to resemble tRNA(Ala) and it encodes a 'tag peptide', a short internal open reading frame. During trans-translation Ala-aminoacylated tmRNA acts like a tRNA, entering the A-site of stalled ribosomes, displacing the stalled mRNA. The ribosome then switches to translate the ORF on the tmRNA; the nascent peptide is terminated with the 'tag peptide' encoded by the tmRNA and targeted for degradation. The ribosome is freed to recommence translation, which seems to be the essential function of trans-translation. This chain is SsrA-binding protein, found in Gloeobacter violaceus (strain ATCC 29082 / PCC 7421).